The chain runs to 65 residues: Large ribosomal subunit protein bL35 (65 aa).

Belongs to the bacterial ribosomal protein bL35 family.

The polypeptide is Large ribosomal subunit protein bL35 (Synechococcus sp. (strain WH7803)).